Reading from the N-terminus, the 556-residue chain is Arginine--tRNA ligase 1 (556 aa).

Positions 132–142 (ANPTGNLHLGH) match the 'HIGH' region motif.

The protein belongs to the class-I aminoacyl-tRNA synthetase family. Monomer.

It is found in the cytoplasm. The enzyme catalyses tRNA(Arg) + L-arginine + ATP = L-arginyl-tRNA(Arg) + AMP + diphosphate. This chain is Arginine--tRNA ligase 1 (argS1), found in Halalkalibacterium halodurans (strain ATCC BAA-125 / DSM 18197 / FERM 7344 / JCM 9153 / C-125) (Bacillus halodurans).